The chain runs to 175 residues: EKC/KEOPS complex subunit TPRKB (175 aa).

The protein belongs to the CGI121/TPRKB family. In terms of assembly, component of the EKC/KEOPS complex.

It is found in the cytoplasm. Its subcellular location is the cytosol. The protein resides in the nucleus. In terms of biological role, component of the EKC/KEOPS complex that is required for the formation of a threonylcarbamoyl group on adenosine at position 37 (t(6)A37) in tRNAs that read codons beginning with adenine. The complex is probably involved in the transfer of the threonylcarbamoyl moiety of threonylcarbamoyl-AMP (TC-AMP) to the N6 group of A37. Tprkb acts as an allosteric effector that regulates the t(6)A activity of the complex. This Danio rerio (Zebrafish) protein is EKC/KEOPS complex subunit TPRKB.